The following is an 87-amino-acid chain: MSETDSQETAPQGDLPDFERSVAELEALIERMERGEQTLEEALRDFERGIHLTRHCQKALSAAEQKVAILLENSEDGDVGPFRPDDS.

Belongs to the XseB family. Heterooligomer composed of large and small subunits.

Its subcellular location is the cytoplasm. The catalysed reaction is Exonucleolytic cleavage in either 5'- to 3'- or 3'- to 5'-direction to yield nucleoside 5'-phosphates.. In terms of biological role, bidirectionally degrades single-stranded DNA into large acid-insoluble oligonucleotides, which are then degraded further into small acid-soluble oligonucleotides. This Halorhodospira halophila (strain DSM 244 / SL1) (Ectothiorhodospira halophila (strain DSM 244 / SL1)) protein is Exodeoxyribonuclease 7 small subunit.